The chain runs to 154 residues: MECPNCHKNASRVIDSRPSDENRAIRRRRECENCGFRFTTFERVERSPLLVIKNDGTREAFNRDKILHGVMMAAQKRPISSEQLDTLVDHVENEIRKQGLNEISSKDIGNLVMKELANLDDVAYIRFASIYRQFKDVSGFMEAMEDMMAKHDKE.

The tract at residues 1–22 is disordered; the sequence is MECPNCHKNASRVIDSRPSDEN. Residues 3 to 34 fold into a zinc finger; that stretch reads CPNCHKNASRVIDSRPSDENRAIRRRRECENC. The ATP-cone domain maps to 49-139; it reads LLVIKNDGTR…IYRQFKDVSG (91 aa).

The protein belongs to the NrdR family. Zn(2+) serves as cofactor.

Negatively regulates transcription of bacterial ribonucleotide reductase nrd genes and operons by binding to NrdR-boxes. This is Transcriptional repressor NrdR from Lactobacillus gasseri (strain ATCC 33323 / DSM 20243 / BCRC 14619 / CIP 102991 / JCM 1131 / KCTC 3163 / NCIMB 11718 / NCTC 13722 / AM63).